The sequence spans 780 residues: E3 UFM1-protein ligase 1 homolog (780 aa).

Over residues 403–413 (STSSTNPNHST) the composition is skewed to polar residues. 2 disordered regions span residues 403–458 (STSS…RSHI) and 734–760 (SSDKQKPEMSEEPKDSDNSNDNQNIDL). Composition is skewed to basic and acidic residues over residues 443 to 458 (KDRSTPDDLESTRSHI) and 736 to 750 (DKQKPEMSEEPKDSD).

It belongs to the UFL1 family.

In terms of biological role, E3 UFM1-protein ligase that mediates ufmylation of target proteins. This is E3 UFM1-protein ligase 1 homolog from Trichoplax adhaerens (Trichoplax reptans).